The sequence spans 121 residues: Securin (121 aa).

Positions 1 to 24 are disordered; the sequence is RATEKSVKTNGPLKQKQTTFSAKK. Short sequence motifs (TEK-box) lie at residues 3 to 5 and 26 to 28; these read TEK. The disordered stretch occupies residues 93–121; the sequence is LGPPSPLNMPSPPWESDVLQSPSSILSTL. An SH3-binding motif is present at residues 95-105; it reads PPSPLNMPSPP. Pro residues predominate over residues 95-105; the sequence is PPSPLNMPSPP. The residue at position 97 (serine 97) is a Phosphoserine; by CDK1. Positions 110–121 are enriched in polar residues; that stretch reads VLQSPSSILSTL.

The protein belongs to the securin family. Interacts with the caspase-like ESPL1, and prevents its protease activity probably by covering its active site. Interacts with p53/TP53 and blocks its activity probably by blocking its binding to DNA. Interacts with the Ku 70 kDa subunit of ds-DNA kinase. Interacts with PTTG1IP. Interacts with RPS10 and DNAJA1. Phosphorylated by CDK1 during mitosis. Post-translationally, phosphorylated in vitro by ds-DNA kinase. In terms of processing, ubiquitinated through 'Lys-11' linkage of ubiquitin moieties by the anaphase promoting complex (APC) at the onset of anaphase, conducting to its degradation. 'Lys-11'-linked ubiquitination is mediated by the E2 ligase UBE2C/UBCH10.

It localises to the cytoplasm. It is found in the nucleus. Its function is as follows. Regulatory protein, which plays a central role in chromosome stability, in the p53/TP53 pathway, and DNA repair. Probably acts by blocking the action of key proteins. During the mitosis, it blocks Separase/ESPL1 function, preventing the proteolysis of the cohesin complex and the subsequent segregation of the chromosomes. At the onset of anaphase, it is ubiquitinated, conducting to its destruction and to the liberation of ESPL1. Its function is however not limited to a blocking activity, since it is required to activate ESPL1. Negatively regulates the transcriptional activity and related apoptosis activity of p53/TP53. The negative regulation of p53/TP53 may explain the strong transforming capability of the protein when it is overexpressed. May also play a role in DNA repair via its interaction with Ku, possibly by connecting DNA damage-response pathways with sister chromatid separation. The sequence is that of Securin (PTTG1) from Sus scrofa (Pig).